Reading from the N-terminus, the 551-residue chain is Arginine--tRNA ligase (551 aa).

Residues 125–135 (ANPTGPLHIGH) carry the 'HIGH' region motif.

Belongs to the class-I aminoacyl-tRNA synthetase family. In terms of assembly, monomer.

The protein localises to the cytoplasm. The enzyme catalyses tRNA(Arg) + L-arginine + ATP = L-arginyl-tRNA(Arg) + AMP + diphosphate. This chain is Arginine--tRNA ligase, found in Nitratidesulfovibrio vulgaris (strain DP4) (Desulfovibrio vulgaris).